A 526-amino-acid polypeptide reads, in one-letter code: NAD(P)H-quinone oxidoreductase subunit 2 (526 aa).

14 helical membrane-spanning segments follow: residues 16 to 36, 43 to 63, 80 to 100, 107 to 127, 133 to 153, 168 to 188, 211 to 231, 245 to 265, 279 to 299, 307 to 327, 335 to 355, 379 to 399, 401 to 421, and 469 to 489; these read ILPE…DLIV, WIPY…YLGW, LSIL…MMSV, GTAL…GMFL, LVMI…LTGY, LLIG…LYGL, LALA…ISAV, PTPV…ALAI, WHFI…VVAL, MLAY…VAGT, IFYL…VILF, LGLS…GFFG, IYLF…LGLI, and LVLS…LFVI.

Belongs to the complex I subunit 2 family. As to quaternary structure, NDH-1 can be composed of about 15 different subunits; different subcomplexes with different compositions have been identified which probably have different functions.

It is found in the cellular thylakoid membrane. It carries out the reaction a plastoquinone + NADH + (n+1) H(+)(in) = a plastoquinol + NAD(+) + n H(+)(out). The enzyme catalyses a plastoquinone + NADPH + (n+1) H(+)(in) = a plastoquinol + NADP(+) + n H(+)(out). NDH-1 shuttles electrons from an unknown electron donor, via FMN and iron-sulfur (Fe-S) centers, to quinones in the respiratory and/or the photosynthetic chain. The immediate electron acceptor for the enzyme in this species is believed to be plastoquinone. Couples the redox reaction to proton translocation, and thus conserves the redox energy in a proton gradient. Cyanobacterial NDH-1 also plays a role in inorganic carbon-concentration. This is NAD(P)H-quinone oxidoreductase subunit 2 from Picosynechococcus sp. (strain ATCC 27264 / PCC 7002 / PR-6) (Agmenellum quadruplicatum).